A 147-amino-acid chain; its full sequence is Cytochrome c' (147 aa).

The first 21 residues, 1 to 21 (MKRMMIVAALAALTTTTVAQA), serve as a signal peptide directing secretion. Heme c contacts are provided by arginine 31, threonine 87, glutamate 88, cysteine 137, cysteine 140, and histidine 141.

In terms of assembly, homodimer. In terms of processing, binds 1 heme c group covalently per subunit.

In terms of biological role, cytochrome c' is the most widely occurring bacterial c-type cytochrome. Cytochromes c' are high-spin proteins and the heme has no sixth ligand. Their exact function is not known. The chain is Cytochrome c' from Rhodospirillum rubrum (strain ATCC 11170 / ATH 1.1.1 / DSM 467 / LMG 4362 / NCIMB 8255 / S1).